The chain runs to 567 residues: Sensor histidine kinase MtrB (567 aa).

Over residues 1 to 15 (MIFGSRRRIRGRRGR) the composition is skewed to basic residues. The segment at 1–20 (MIFGSRRRIRGRRGRSGPMT) is disordered. 2 helical membrane-spanning segments follow: residues 42 to 62 (VVAL…FVLT) and 213 to 233 (GTMA…ALLV). The 53-residue stretch at 235–287 (RQVVVPVRSASRIAERFAEGHLSERMPVRGEDDMARLAVSFNDMAESLSRQIA) folds into the HAMP domain. The Histidine kinase domain maps to 302-519 (DVSHELRTPL…CFRLTLPLVR (218 aa)). His305 is subject to Phosphohistidine; by autocatalysis. The disordered stretch occupies residues 526-567 (SPLPMKPIPQPVLQPVAQPNPQPMPPEYKERQRPREHAEWSG). Over residues 529 to 551 (PMKPIPQPVLQPVAQPNPQPMPP) the composition is skewed to pro residues. Positions 552 to 567 (EYKERQRPREHAEWSG) are enriched in basic and acidic residues.

It is found in the cell membrane. It carries out the reaction ATP + protein L-histidine = ADP + protein N-phospho-L-histidine.. In terms of biological role, member of the two-component regulatory system MtrA/MtrB. Seems to function as a membrane-associated protein kinase that phosphorylates MtrA in response to environmental signals. This Mycobacterium bovis (strain ATCC BAA-935 / AF2122/97) protein is Sensor histidine kinase MtrB (mtrB).